Consider the following 342-residue polypeptide: Holliday junction branch migration complex subunit RuvB (342 aa).

Positions 1 to 179 (MTNILSPEKS…FGIPMRLNFY (179 aa)) are large ATPase domain (RuvB-L). ATP is bound by residues I18, R19, G60, K63, T64, T65, 126 to 128 (EDF), R169, Y179, and R216. T64 contributes to the Mg(2+) binding site. The interval 180-250 (NTEELKQVLN…ICDFGLKRLT (71 aa)) is small ATPAse domain (RuvB-S). The segment at 253 to 342 (SIGLDSNDYR…HQFNILNENE (90 aa)) is head domain (RuvB-H). Residues R289, R308, and R313 each contribute to the DNA site.

The protein belongs to the RuvB family. In terms of assembly, homohexamer. Forms an RuvA(8)-RuvB(12)-Holliday junction (HJ) complex. HJ DNA is sandwiched between 2 RuvA tetramers; dsDNA enters through RuvA and exits via RuvB. An RuvB hexamer assembles on each DNA strand where it exits the tetramer. Each RuvB hexamer is contacted by two RuvA subunits (via domain III) on 2 adjacent RuvB subunits; this complex drives branch migration. In the full resolvosome a probable DNA-RuvA(4)-RuvB(12)-RuvC(2) complex forms which resolves the HJ.

It is found in the cytoplasm. It catalyses the reaction ATP + H2O = ADP + phosphate + H(+). Its function is as follows. The RuvA-RuvB-RuvC complex processes Holliday junction (HJ) DNA during genetic recombination and DNA repair, while the RuvA-RuvB complex plays an important role in the rescue of blocked DNA replication forks via replication fork reversal (RFR). RuvA specifically binds to HJ cruciform DNA, conferring on it an open structure. The RuvB hexamer acts as an ATP-dependent pump, pulling dsDNA into and through the RuvAB complex. RuvB forms 2 homohexamers on either side of HJ DNA bound by 1 or 2 RuvA tetramers; 4 subunits per hexamer contact DNA at a time. Coordinated motions by a converter formed by DNA-disengaged RuvB subunits stimulates ATP hydrolysis and nucleotide exchange. Immobilization of the converter enables RuvB to convert the ATP-contained energy into a lever motion, pulling 2 nucleotides of DNA out of the RuvA tetramer per ATP hydrolyzed, thus driving DNA branch migration. The RuvB motors rotate together with the DNA substrate, which together with the progressing nucleotide cycle form the mechanistic basis for DNA recombination by continuous HJ branch migration. Branch migration allows RuvC to scan DNA until it finds its consensus sequence, where it cleaves and resolves cruciform DNA. The protein is Holliday junction branch migration complex subunit RuvB of Rickettsia typhi (strain ATCC VR-144 / Wilmington).